Reading from the N-terminus, the 566-residue chain is Interleukin-1 receptor-like 1 (566 aa).

The signal sequence occupies residues 1–26 (MIGKWRMGLWALAILTVPMYFIVTEG). Ig-like C2-type domains are found at residues 27 to 109 (RKTS…LNVT), 120 to 207 (PDYM…RSFT), and 217 to 323 (PVIT…VRLR). Topologically, residues 27-331 (RKTSWGLENE…LRRKQPIDHQ (305 aa)) are extracellular. Residues Cys42 and Cys93 are joined by a disulfide bond. Asn107, Asn146, and Asn194 each carry an N-linked (GlcNAc...) asparagine glycan. 2 disulfide bridges follow: Cys117-Cys157 and Cys139-Cys187. The flexible linker stretch occupies residues 204 to 216 (RSFTVEEKGFSTF). N-linked (GlcNAc...) asparagine glycosylation is found at Asn225, Asn258, and Asn277. Cystine bridges form between Cys240-Cys307 and Cys243-Cys286. Residue Lys325 forms a Glycyl lysine isopeptide (Lys-Gly) (interchain with G-Cter in ubiquitin) linkage. Residues 332–354 (STYYIVAGCSLLLMFINVLVIVL) traverse the membrane as a helical segment. Topologically, residues 355–566 (KVFWIEVALF…GKVCLDLKHF (212 aa)) are cytoplasmic. Positions 379–539 (KLYDAYIIYP…KFWKHVRYQM (161 aa)) constitute a TIR domain. Ser441 carries the phosphoserine modification. Glu465 is an active-site residue.

Belongs to the interleukin-1 receptor family. As to quaternary structure, interacts with MYD88, IRAK1, IRAK4, and TRAF6. Bound to its ligand IL-33, interacts with IL1RAP to form the minimal interleukin-33 signaling complex with a 1:1:1 stoichiometry. Interacts with KIT (bound to KITLG/SCF). A mast cell-specific KITLG/SCF-induced interleukin-33 signaling complex contains IL1RL1, IL1RAP, KIT and MYD88. Interacts with TMED1. Post-translationally, phosphorylated by GSK3B at Ser-441; leading to proteasomal degradation. Ubiquitinated at Lys-325 in a FBXL19-mediated manner; leading to proteasomal degradation. Ubiquitination by TRAF6 via 'Lys-27'-linked polyubiquitination and deubiquitination by USP38 serves as a critical regulatory mechanism for fine-tuning IL1RL1-mediated inflammatory response. Isoform A is detected in spleen, lung, bone marrow and lymh node. Isoform B is predominant in fibroblasts.

The protein localises to the cell membrane. The protein resides in the secreted. It carries out the reaction NAD(+) + H2O = ADP-D-ribose + nicotinamide + H(+). Functionally, receptor for interleukin-33 (IL-33) which plays crucial roles in innate and adaptive immunity, contributing to tissue homeostasis and responses to environmental stresses together with coreceptor IL1RAP. Its stimulation recruits MYD88, IRAK1, IRAK4, and TRAF6, followed by phosphorylation of MAPK3/ERK1 and/or MAPK1/ERK2, MAPK14, and MAPK8. Possibly involved in helper T-cell function. Upon tissue injury, induces UCP2-dependent mitochondrial rewiring that attenuates the generation of reactive oxygen species and preserves the integrity of Krebs cycle required for persistent production of itaconate and subsequent GATA3-dependent differentiation of inflammation-resolving alternatively activated macrophages. Its function is as follows. Inhibits IL-33 signaling. The chain is Interleukin-1 receptor-like 1 (Il1rl1) from Rattus norvegicus (Rat).